A 365-amino-acid chain; its full sequence is Phosphoserine aminotransferase (365 aa).

Position 40 (arginine 40) interacts with L-glutamate. Residues 74 to 75 (AS), phenylalanine 99, threonine 155, aspartate 177, and glutamine 200 each bind pyridoxal 5'-phosphate. Lysine 201 carries the N6-(pyridoxal phosphate)lysine modification. 241-242 (NT) contacts pyridoxal 5'-phosphate.

It belongs to the class-V pyridoxal-phosphate-dependent aminotransferase family. SerC subfamily. Homodimer. The cofactor is pyridoxal 5'-phosphate.

The protein resides in the cytoplasm. The enzyme catalyses O-phospho-L-serine + 2-oxoglutarate = 3-phosphooxypyruvate + L-glutamate. It catalyses the reaction 4-(phosphooxy)-L-threonine + 2-oxoglutarate = (R)-3-hydroxy-2-oxo-4-phosphooxybutanoate + L-glutamate. It participates in amino-acid biosynthesis; L-serine biosynthesis; L-serine from 3-phospho-D-glycerate: step 2/3. In terms of biological role, catalyzes the reversible conversion of 3-phosphohydroxypyruvate to phosphoserine and of 3-hydroxy-2-oxo-4-phosphonooxybutanoate to phosphohydroxythreonine. The polypeptide is Phosphoserine aminotransferase (Lactococcus lactis subsp. cremoris (strain MG1363)).